The primary structure comprises 182 residues: Putative manganese efflux pump MntP (182 aa).

6 helical membrane-spanning segments follow: residues 6 to 26, 37 to 57, 71 to 91, 101 to 121, 131 to 151, and 162 to 182; these read LIPL…VSLG, ILYI…IGMV, HFAG…STIL, IGIS…SVGL, IITI…GLLI, and YGEI…LFPI.

This sequence belongs to the MntP (TC 9.B.29) family.

The protein resides in the cell membrane. Probably functions as a manganese efflux pump. The chain is Putative manganese efflux pump MntP from Bacillus cereus (strain B4264).